Consider the following 584-residue polypeptide: MSFLRRHISLFRSQKQLIDVFAPVSPNLELAEIHRRVIEDQGPALLFHNVIGSSFPVLTNLFGTKHRVDQLFSQAPDNLIARVAHLISSTPKLSSLWKSRDLLKRISSLGLKKARFRRFPFVSMSSVNLDHLPLLTSWPEDGGAFLTLPLVYTESPTLTTPNLGMYRVQRFNQNTMGLHFQIQKGGGMHLYEAEQKKQNLPVSVFLSGNPFLTLSAIAPLPENVSELLFATFLQGAKLLYKKTNDHPHPLLYDAEFILVGESPAGKRRPEGPFGDHFGYYSLQHDFPEFHCHKIYHRKDAIYPATVVGKPYQEDFYIGNKLQEYLSPLFPLVMPGVRRLKSYGESGFHALTAAVVKERYWRESLTTALRILGEGQLSLTKFLMVTDQEVPLDRFSVVLETILERLQPDRDLIIFSETANDTLDYTGPSLNKGSKGIFMGIGKAIRDLPHGYQGGKIHGVQDIAPFCRGCLVLETSLEDRCIKSLLHHPDLKSWPLIILADNLRETIQSEKDFLWRTFTRCAPANDLHALHSHFATHRPNYNFPFVIDALMKPSYPKEVEVDPSTKQKVSERWHAYFPNKETFYI.

It belongs to the UbiD family. As to quaternary structure, component of the decarboxylase complex composed of the subunits B and C (Potential). The subunit D usually found in other organisms seems to be absent.

It catalyses the reaction 4-hydroxybenzoate + H(+) = phenol + CO2. With respect to regulation, the enzyme activity is enhanced by Mg(2+), Fe(2+), Mn(2+) and Ca(2+). No stimulation is observed with Cu(2+) and Zn(2+). In terms of biological role, catalyzes the reversible decarboxylation of 4-hydroxybenzoate. The polypeptide is 4-hydroxybenzoate decarboxylase subunit C (Chlamydia pneumoniae (Chlamydophila pneumoniae)).